The chain runs to 1022 residues: Integrator complex subunit 4 (1022 aa).

The 1D-myo-inositol hexakisphosphate site is built by T148 and K184. Positions 818 to 840 are disordered; the sequence is KDEEEKPPVVETDMPMKESVSRD.

It belongs to the Integrator subunit 4 family. Belongs to the multiprotein complex Integrator, at least composed of IntS1, IntS2, IntS3, IntS4, omd/IntS5, IntS6, defl/IntS7, IntS8, IntS9, IntS10, IntS11, IntS12, asun/IntS13, IntS14 and IntS15. The core complex associates with protein phosphatase 2A subunits mts/PP2A and Pp2A-29B, to form the Integrator-PP2A (INTAC) complex. IntS4 is part of the RNA endonuclease subcomplex, composed of IntS4, IntS9, IntS11 and inositol hexakisphosphate (InsP6).

It is found in the nucleus. In terms of biological role, component of the integrator complex, a multiprotein complex that terminates RNA polymerase II (Pol II) transcription in the promoter-proximal region of genes. The integrator complex provides a quality checkpoint during transcription elongation by driving premature transcription termination of transcripts that are unfavorably configured for transcriptional elongation: the complex terminates transcription by (1) catalyzing dephosphorylation of the C-terminal domain (CTD) of Pol II subunit Polr2A/Rbp1 and Spt5, and (2) degrading the exiting nascent RNA transcript via endonuclease activity. The integrator complex is also involved in the 3'-end processing of the U7 snRNA, and also the spliceosomal snRNAs U1, U2, U4 and U5. This is Integrator complex subunit 4 from Drosophila melanogaster (Fruit fly).